Consider the following 355-residue polypeptide: DNA polymerase IV (355 aa).

Residues 7–188 enclose the UmuC domain; the sequence is IIHIDMDCFY…LPVRKLFGVG (182 aa). Mg(2+) is bound by residues Asp11 and Asp106. Glu107 is a catalytic residue.

Belongs to the DNA polymerase type-Y family. In terms of assembly, monomer. It depends on Mg(2+) as a cofactor.

The protein localises to the cytoplasm. It carries out the reaction DNA(n) + a 2'-deoxyribonucleoside 5'-triphosphate = DNA(n+1) + diphosphate. Functionally, poorly processive, error-prone DNA polymerase involved in untargeted mutagenesis. Copies undamaged DNA at stalled replication forks, which arise in vivo from mismatched or misaligned primer ends. These misaligned primers can be extended by PolIV. Exhibits no 3'-5' exonuclease (proofreading) activity. May be involved in translesional synthesis, in conjunction with the beta clamp from PolIII. This chain is DNA polymerase IV, found in Legionella pneumophila (strain Corby).